Reading from the N-terminus, the 1165-residue chain is Adhesion G-protein coupled receptor G6 (1165 aa).

Positions 1–30 are cleaved as a signal peptide; it reads MMFDTLGKRCCPWRLKPSALLFLFVLCVTC. At 31–832 the chain is on the extracellular side; the sequence is VPLSVCGCGS…ASQIDGRNTK (802 aa). A disulfide bridge connects residues Cys-41 and Cys-67. Positions 41–149 constitute a CUB domain; sequence CRLVLSNPSG…KGFNASYIRV (109 aa). Residues Glu-89 and Asp-97 each coordinate Ca(2+). The cysteines at positions 94 and 111 are disulfide-linked. The N-linked (GlcNAc...) asparagine glycan is linked to Asn-121. Residues Asp-134, Ser-136, and Ile-137 each contribute to the Ca(2+) site. An N-linked (GlcNAc...) asparagine glycan is attached at Asn-143. Positions 154–356 constitute a Pentraxin (PTX) domain; it reads RNQKVILPQT…ALKAEGNLSC (203 aa). Intrachain disulfides connect Cys-186–Cys-254 and Cys-231–Cys-277. Asn-258, Asn-314, Asn-324, Asn-353, Asn-370, Asn-410, Asn-417, Asn-424, Asn-458, Asn-462, and Asn-478 each carry an N-linked (GlcNAc...) asparagine glycan. The segment at 446 to 807 is mediates interaction with laminin-2; sequence DKRLVLWALL…LDAGETICLC (362 aa). 2 disulfide bridges follow: Cys-498/Cys-533 and Cys-521/Cys-550. 10 N-linked (GlcNAc...) asparagine glycosylation sites follow: Asn-536, Asn-549, Asn-563, Asn-570, Asn-665, Asn-674, Asn-720, Asn-746, Asn-781, and Asn-788. In terms of domain architecture, GAIN-B spans 640 to 823; the sequence is PHVNIETQNL…GVLMDLPRSA (184 aa). 2 cysteine pairs are disulfide-bonded: Cys-773-Cys-805 and Cys-792-Cys-807. A GPS region spans residues 773–823; that stretch reads CAFWDMNKNKSFGGWNTSGCVAHSDLDAGETICLCSHFTHFGVLMDLPRSA. Residues 812–820 are stachel; the sequence is HFGVLMDLP. A helical transmembrane segment spans residues 833–853; sequence VLTFITYIGCGISAIFSAATL. Residues 854–873 lie on the Cytoplasmic side of the membrane; that stretch reads LTYVAFEKLRRDYPSKILMN. Residues 874–894 form a helical membrane-spanning segment; the sequence is LSSALLFLNLIFLLDGWVTSF. The Extracellular segment spans residues 895–899; sequence GVAGL. The helical transmembrane segment at 900 to 920 threads the bilayer; it reads CTAVAALLHFFLLATFTWMGL. Residues 921-940 are Cytoplasmic-facing; the sequence is EAIHMYIALVKVFNTYIHRY. A helical membrane pass occupies residues 941-961; the sequence is ILKFCIIGWGLPALVVSIILV. The Extracellular segment spans residues 962–994; that stretch reads SRRQNEVYGKESYGKDQDDEFCWIQDPVVFYVS. The helical transmembrane segment at 995-1015 threads the bilayer; it reads CAGYFGVMFFLNVAMFIVVMV. Over 1016–1039 the chain is Cytoplasmic; it reads QICGRNGKRSNRTLREEVLRNLRS. Residues 1040–1060 traverse the membrane as a helical segment; it reads VVSLTFLLGMTWGFAFFAWGP. At 1061-1062 the chain is on the extracellular side; the sequence is LN. The helical transmembrane segment at 1063-1083 threads the bilayer; it reads IPFMYLFSIFNSLQGLFIFIF. Asn-1073 lines the 17alpha-hydroxyprogesterone pocket. Over 1084–1165 the chain is Cytoplasmic; it reads HCAMKENVQK…KRNSHSDNFS (82 aa). Low complexity predominate over residues 1126–1154; sequence NLGKSLSSSSIGSNSTYLTSKSKSSSTTY. Residues 1126 to 1165 form a disordered region; the sequence is NLGKSLSSSSIGSNSTYLTSKSKSSSTTYFKRNSHSDNFS. Residues Ser-1135 and Ser-1138 each carry the phosphoserine modification.

It belongs to the G-protein coupled receptor 2 family. Adhesion G-protein coupled receptor (ADGR) subfamily. As to quaternary structure, heterodimer of 2 chains generated by proteolytic processing; the large extracellular N-terminal fragment and the membrane-bound C-terminal fragment predominantly remain associated and non-covalently linked. Interacts with Laminin-2; this interaction stabilizes the receptor in an inactive state. Laminin-2 polymerization could facilitate ADGRG6-NTF removal, thereby exposing the tethered agonist to drive myelination. Interacts with PRNP. Interacts with ITGB1. Interacts with LRP1. Proteolytically cleaved into 2 conserved sites: one in the GPS region of the GAIN-B domain (S1 site) and the other in the middle of the extracellular domain (S2 site). The proteolytic cleavage at S1 site generates an extracellular subunit and a seven-transmembrane subunit. Furin is involved in the cleavage of the S2 site generating a soluble fragment. Processing at the GPS region occurred independent of and probably prior to the cleavage at the S2 site. Proteolytic cleavage is required for activation of the receptor. Expressed at high levels in the heart, somite and otic vesicle during embryogenesis and in adult lung.

Its subcellular location is the cell membrane. Forms a heterodimer of 2 chains generated by proteolytic processing that remain associated through non-covalent interactions mediated by the GAIN-B domain. In the inactivated receptor, the Stachel sequence (also named stalk) is embedded in the GAIN-B domain, where it adopts a beta-strand conformation. On activation, the Stachel moves into the 7 transmembrane region and adopts a twisted hook-shaped configuration that forms contacts within the receptor, leading to coupling of a G-alpha protein, which activates signaling. The cleaved GAIN-B and N-terminal domains can then dissociate from the rest of the receptor. Its function is as follows. Adhesion G-protein coupled receptor (aGPCR) for steroid hormones, such as progesterone and 17alpha-hydroxyprogesterone (17OHP). Involved in many biological processes, such as myelination, sprouting angiogenesis, placenta, ear and cartilage development. Ligand binding causes a conformation change that triggers signaling via guanine nucleotide-binding proteins (G proteins) and modulates the activity of downstream effectors, such as adenylate cyclase. ADGRG6 is coupled to G(i) G alpha proteins and mediates inhibition of adenylate cyclase. Also able to couple to G(q) G proteins. Involved in myelination of the peripheral nervous system: required for differentiation of promyelinating Schwann cells and for normal myelination of axons. Also acts as a regulator of body length and bone mass. Acts as a regulator of blood-brain barrier formation in the central nervous system vie its association with LRP1 and ITGB1. This chain is Adhesion G-protein coupled receptor G6, found in Mus musculus (Mouse).